We begin with the raw amino-acid sequence, 173 residues long: Photosystem I assembly protein Ycf3 (173 aa).

TPR repeat units follow at residues 35–68 (AYVYYRDGLSAQNDGDYAEALENYDEALKLEDNP), 72–105 (GETLKNMAIIYMSNGEEERAIETYRRALDENSNQ), and 120–153 (GRIAEEDGRQDDADRWFDQAAEAWTQAVRLNPGG).

It belongs to the Ycf3 family.

Its subcellular location is the cellular thylakoid membrane. Essential for the assembly of the photosystem I (PSI) complex. May act as a chaperone-like factor to guide the assembly of the PSI subunits. The polypeptide is Photosystem I assembly protein Ycf3 (Parasynechococcus marenigrum (strain WH8102)).